Consider the following 501-residue polypeptide: E3 ubiquitin-protein ligase TRIM35 (501 aa).

M1 is modified (N-acetylmethionine). S8 carries the post-translational modification Phosphoserine. The RING-type zinc finger occupies 21–61 (CAVCYDPFRDAVTLRCGHNFCRRCVSGCWEVQTTPSCPVCK). The B box-type zinc-finger motif lies at 96-137 (RSPRPCRAHRAPLTLFCVEDKELLCCACQADARHQEHRVQPI). 4 residues coordinate Zn(2+): C101, H104, C123, and H129. The stretch at 209–252 (MKEESRKKHLLAEEKMKQLAEQTEALAREIERLQMEMKEDDMTF) forms a coiled coil. One can recognise a B30.2/SPRY domain in the interval 284 to 495 (LESLQYRVWK…LRICHLRVSI (212 aa)).

In terms of assembly, interacts with PKM isoform M2, but not isoform M1; this interaction may compete with that between PKM and FGFR1, and hence reduces FGFR1-dependent tyrosine phosphorylation of PKM. Interacts with IRF7; this interaction promotes IRF7 proteasomal degradation. Interacts with TRAF3; this interaction promotes TRAF3 activation.

It is found in the cytoplasm. The protein resides in the nucleus. It catalyses the reaction S-ubiquitinyl-[E2 ubiquitin-conjugating enzyme]-L-cysteine + [acceptor protein]-L-lysine = [E2 ubiquitin-conjugating enzyme]-L-cysteine + N(6)-ubiquitinyl-[acceptor protein]-L-lysine.. Its pathway is protein modification; protein ubiquitination. E3 ubiquitin-protein ligase that participates in multiple biological processes including cell death, glucose metabolism, and in particular, the innate immune response. Mediates 'Lys-63'-linked polyubiquitination of TRAF3 thereby promoting type I interferon production via RIG-I signaling pathway. Can also catalyze 'Lys-48'-linked polyubiquitination and proteasomal degradation of viral proteins such as influenza virus PB2. Acts as a negative feedback regulator of TLR7- and TLR9-triggered signaling. Mechanistically, promotes the 'Lys-48'-linked ubiquitination of IRF7 and induces its degradation via a proteasome-dependent pathway. Reduces FGFR1-dependent tyrosine phosphorylation of PKM, inhibiting PKM-dependent lactate production, glucose metabolism, and cell growth. This chain is E3 ubiquitin-protein ligase TRIM35 (Trim35), found in Rattus norvegicus (Rat).